We begin with the raw amino-acid sequence, 350 residues long: Quinone oxidoreductase-like protein 2 (350 aa).

At Lys-36 the chain carries N6-acetyllysine. Lys-201 carries the post-translational modification N6-succinyllysine. An N6-acetyllysine mark is found at Lys-302 and Lys-328.

It belongs to the zinc-containing alcohol dehydrogenase family. Quinone oxidoreductase subfamily.

This Rattus norvegicus (Rat) protein is Quinone oxidoreductase-like protein 2.